We begin with the raw amino-acid sequence, 245 residues long: Small ribosomal subunit protein uS2 (245 aa).

The protein belongs to the universal ribosomal protein uS2 family.

The chain is Small ribosomal subunit protein uS2 from Pseudomonas fluorescens (strain Pf0-1).